A 61-amino-acid polypeptide reads, in one-letter code: MARKALIEKWKKTPKYATKAYTRCRICGRPHAVLKKYGICRICFRELAYKGEIPGCKKASW.

Positions 24, 27, 40, and 43 each coordinate Zn(2+).

It belongs to the universal ribosomal protein uS14 family. Zinc-binding uS14 subfamily. As to quaternary structure, part of the 30S ribosomal subunit. Contacts proteins S3 and S10. Requires Zn(2+) as cofactor.

Its function is as follows. Binds 16S rRNA, required for the assembly of 30S particles and may also be responsible for determining the conformation of the 16S rRNA at the A site. The sequence is that of Small ribosomal subunit protein uS14 from Clostridium kluyveri (strain NBRC 12016).